A 206-amino-acid chain; its full sequence is Transcription antitermination protein NusB (206 aa).

Residues 135-206 (ARGEKTSAQE…ETQPPGVNEV (72 aa)) form a disordered region. A compositionally biased stretch (low complexity) spans 169–180 (ATPATTPVTTTV).

It belongs to the NusB family.

Involved in transcription antitermination. Required for transcription of ribosomal RNA (rRNA) genes. Binds specifically to the boxA antiterminator sequence of the ribosomal RNA (rrn) operons. The chain is Transcription antitermination protein NusB from Heliobacterium modesticaldum (strain ATCC 51547 / Ice1).